Here is a 283-residue protein sequence, read N- to C-terminus: Large ribosomal subunit protein uL2 (283 aa).

Disordered regions lie at residues 34 to 53 and 224 to 283; these read TEPY…TARH and AMNP…KKKK. The segment covering 232 to 245 has biased composition (gly residues); that stretch reads NGGGQGKSKGGGGW. Residues 256 to 268 show a composition bias toward basic residues; the sequence is AKGKKTRHKRKNS.

The protein belongs to the universal ribosomal protein uL2 family. As to quaternary structure, part of the 50S ribosomal subunit. Forms a bridge to the 30S subunit in the 70S ribosome.

One of the primary rRNA binding proteins. Required for association of the 30S and 50S subunits to form the 70S ribosome, for tRNA binding and peptide bond formation. It has been suggested to have peptidyltransferase activity; this is somewhat controversial. Makes several contacts with the 16S rRNA in the 70S ribosome. This chain is Large ribosomal subunit protein uL2, found in Methylacidiphilum infernorum (isolate V4) (Methylokorus infernorum (strain V4)).